The sequence spans 639 residues: MEIIRSNFKSNLHKVYQAIEEADFFAIDGEFSGISDGPSVSALTNGFDTPEERYQKLKKHSMDFLLFQFGLCTFKYDYTDSKYITKSFNFYVFPKPFNRSSPDVKFVCQSSSIDFLASQGFDFNKVFRNGIPYLNQEEERQLREQYDEKRSQANGAGALSYVSPNTSKCPVTIPEDQKKFIDQVVEKIEDLLQSEENKNLDLEPCTGFQRKLIYQTLSWKYPKGIHVETLETEKKERYIVISKVDEEERKRREQQKHAKEQEELNDAVGFSRVIHAIANSGKLVIGHNMLLDVMHTVHQFYCPLPADLSEFKEMTTCVFPRLLDTKLMASTQPFKDIINNTSLAELEKRLKETPFNPPKVESAEGFPSYDTASEQLHEAGYDAYITGLCFISMANYLGSFLSPPKIHVSARSKLIEPFFNKLFLMRVMDIPYLNLEGPDLQPKRDHVLHVTFPKEWKTSDLYQLFSAFGNIQISWIDDTSAFVSLSQPEQVKIAVNTSKYAESYRIQTYAEYMGRKQEEKQIKRKWTEDSWKEADSKRLNPQCIPYTLQNHYYRNNSFTAPSTVGKRNLSPSQEEAGLEDGVSGEISDTELEQTDSCAEPLSEGRKKAKKLKRMKKELSPAGSISKNSPATLFEVPDTW.

A divalent metal cation contacts are provided by aspartate 28 and glutamate 30. 2 positions are modified to phosphoserine: serine 163 and serine 167. One can recognise an R3H domain in the interval lysine 178–aspartate 245. Lysine 220 carries the post-translational modification N6-acetyllysine. 2 residues coordinate a divalent metal cation: aspartate 292 and aspartate 382. Lysine 499 is subject to N6-acetyllysine. Serine 530 carries the post-translational modification Phosphoserine. Serine 557 carries the post-translational modification Phosphoserine; by MAPKAPK2. Residues alanine 560–tryptophan 639 are disordered. Serine 583 and serine 587 each carry phosphoserine. Basic residues predominate over residues lysine 606 to lysine 615. Residues serine 619, serine 623, and serine 628 each carry the phosphoserine modification. Phosphothreonine is present on threonine 631.

The protein belongs to the CAF1 family. Homodimer. Found in a mRNA decay complex with RENT1, RENT2 and RENT3B. Interacts with KHSRP. Interacts with CELF1/CUGBP1. Interacts with ZC3HAV1 in an RNA-independent manner. Interacts with DHX36. The cofactor is Mg(2+). Post-translationally, phosphorylation by MAPKAPK2, preventing GADD45A mRNA degradation after genotoxic stress. In terms of tissue distribution, ubiquitous.

It localises to the nucleus. The protein localises to the cytoplasm. Its subcellular location is the nucleolus. It catalyses the reaction Exonucleolytic cleavage of poly(A) to 5'-AMP.. In terms of biological role, 3'-exoribonuclease that has a preference for poly(A) tails of mRNAs, thereby efficiently degrading poly(A) tails. Exonucleolytic degradation of the poly(A) tail is often the first step in the decay of eukaryotic mRNAs and is also used to silence certain maternal mRNAs translationally during oocyte maturation and early embryonic development. Interacts with both the 3'-end poly(A) tail and the 5'-end cap structure during degradation, the interaction with the cap structure being required for an efficient degradation of poly(A) tails. Involved in nonsense-mediated mRNA decay, a critical process of selective degradation of mRNAs that contain premature stop codons. Also involved in degradation of inherently unstable mRNAs that contain AU-rich elements (AREs) in their 3'-UTR, possibly via its interaction with KHSRP. Probably mediates the removal of poly(A) tails of AREs mRNAs, which constitutes the first step of destabilization. Also able to recognize and trim poly(A) tails of microRNAs such as MIR21 and H/ACA box snoRNAs (small nucleolar RNAs) leading to microRNAs degradation or snoRNA increased stability. This chain is Poly(A)-specific ribonuclease PARN (PARN), found in Homo sapiens (Human).